A 430-amino-acid polypeptide reads, in one-letter code: Histidine--tRNA ligase (430 aa).

Belongs to the class-II aminoacyl-tRNA synthetase family. Homodimer.

Its subcellular location is the cytoplasm. It carries out the reaction tRNA(His) + L-histidine + ATP = L-histidyl-tRNA(His) + AMP + diphosphate + H(+). The chain is Histidine--tRNA ligase from Lactococcus lactis subsp. cremoris (strain MG1363).